Consider the following 177-residue polypeptide: RNA polymerase sigma-E factor (177 aa).

Positions 34 to 47 match the Polymerase core binding motif; sequence DLLQTALARTYGRW. Residues 128–147 constitute a DNA-binding region (H-T-H motif); it reads TEETAAALGMSAGTVKSTLH.

Belongs to the sigma-70 factor family. ECF subfamily.

It is found in the cytoplasm. In terms of biological role, sigma factors are initiation factors that promote the attachment of RNA polymerase to specific initiation sites and are then released. This sigma factor is required for normal cell wall integrity; it is recruited by RNA polymerase to transcribe genes with cell wall-related functions. It is also involved in the transcription of the dagA gene coding for an extracellular agar-degrading enzyme. This chain is RNA polymerase sigma-E factor (sigE), found in Streptomyces coelicolor (strain ATCC BAA-471 / A3(2) / M145).